The sequence spans 1114 residues: Hephaestin-like protein (1114 aa).

Residues 1–26 form the signal peptide; it reads MMDRSNAAFVLTACFIFSQLICHVAA. 6 Plastocyanin-like domains span residues 27–210, 218–365, 380–562, 572–719, 730–915, and 924–1114; these read ITRT…LICR, QQSG…VTKC, KRTY…LLTC, TRKD…VNTC, KTRD…LIIC, and TEER…LLKA. At 27–1091 the chain is on the extracellular side; the sequence is ITRTYYIAAV…KTTPKPITAA (1065 aa). N-linked (GlcNAc...) asparagine glycosylation is present at N121. The Cu cation site is built by H129, H131, H189, and H191. C183 and C209 are joined by a disulfide. N-linked (GlcNAc...) asparagine glycosylation is present at N236. C284 and C365 are disulfide-bonded. 3 residues coordinate Cu cation: H303, C346, and H351. N361, N478, and N489 each carry an N-linked (GlcNAc...) asparagine glycan. Cystine bridges form between C536–C562 and C638–C719. Cu cation contacts are provided by H657, C700, H705, and M710. N831 carries N-linked (GlcNAc...) asparagine glycosylation. The cysteines at positions 889 and 915 are disulfide-linked. The N-linked (GlcNAc...) asparagine glycan is linked to N944. Positions 1014, 1017, 1019, 1059, 1060, 1061, 1065, and 1070 each coordinate Cu cation. Residues 1092–1112 traverse the membrane as a helical segment; sequence SSFVTSSIFIYLSFPVLAMLL. Over 1113-1114 the chain is Cytoplasmic; sequence KA.

The protein belongs to the multicopper oxidase family. The cofactor is Cu cation. Component of the acid-insoluble and acid-soluble organic matrix of the aragonitic skeleton (at protein level).

The protein resides in the membrane. Its function is as follows. May function as a ferroxidase and may be involved in copper transport and homeostasis. In Acropora millepora (Staghorn coral), this protein is Hephaestin-like protein.